Consider the following 258-residue polypeptide: Phosphonates import ATP-binding protein PhnC 3 (258 aa).

In terms of domain architecture, ABC transporter spans 2–246 (IEFKNVSLVY…TFEEIYGRKI (245 aa)). 35–42 (GLSGAGKS) is a binding site for ATP.

This sequence belongs to the ABC transporter superfamily. Phosphonates importer (TC 3.A.1.9.1) family. The complex is composed of two ATP-binding proteins (PhnC), two transmembrane proteins (PhnE) and a solute-binding protein (PhnD).

The protein localises to the cell membrane. It carries out the reaction phosphonate(out) + ATP + H2O = phosphonate(in) + ADP + phosphate + H(+). Functionally, part of the ABC transporter complex PhnCDE involved in phosphonates import. Responsible for energy coupling to the transport system. This Halalkalibacterium halodurans (strain ATCC BAA-125 / DSM 18197 / FERM 7344 / JCM 9153 / C-125) (Bacillus halodurans) protein is Phosphonates import ATP-binding protein PhnC 3.